A 444-amino-acid polypeptide reads, in one-letter code: Ribosomal protein uS12 methylthiotransferase RimO (444 aa).

Residues 4–120 (KSAALVSLGC…LKSFIRDHEA (117 aa)) form the MTTase N-terminal domain. [4Fe-4S] cluster is bound by residues Cys-13, Cys-49, Cys-83, Cys-157, Cys-161, and Cys-164. The region spanning 143 to 371 (VEGRSSAYVK…LELQRGISRR (229 aa)) is the Radical SAM core domain. Residues 374 to 442 (ESLVGRVLPV…DYDVEAELLS (69 aa)) form the TRAM domain.

It belongs to the methylthiotransferase family. RimO subfamily. The cofactor is [4Fe-4S] cluster.

It is found in the cytoplasm. It catalyses the reaction L-aspartate(89)-[ribosomal protein uS12]-hydrogen + (sulfur carrier)-SH + AH2 + 2 S-adenosyl-L-methionine = 3-methylsulfanyl-L-aspartate(89)-[ribosomal protein uS12]-hydrogen + (sulfur carrier)-H + 5'-deoxyadenosine + L-methionine + A + S-adenosyl-L-homocysteine + 2 H(+). Catalyzes the methylthiolation of an aspartic acid residue of ribosomal protein uS12. This Syntrophobacter fumaroxidans (strain DSM 10017 / MPOB) protein is Ribosomal protein uS12 methylthiotransferase RimO.